A 380-amino-acid polypeptide reads, in one-letter code: Kappa-type opioid receptor (380 aa).

Over 1 to 57 the chain is Extracellular; it reads MGRRRQGPAQPASELPARNACLLPNGSAWLPGWAEPDGNGSAGPQDEQLEPAHISPA. 2 N-linked (GlcNAc...) asparagine glycosylation sites follow: N25 and N39. A helical transmembrane segment spans residues 58–85; it reads IPVIITAVYSVVFVVGLVGNSLVMFVII. Residues 86–95 are Cytoplasmic-facing; sequence RYTKMKTATN. Residues 96-119 traverse the membrane as a helical segment; sequence IYIFNLALADALVTTTMPFQSTVY. The Extracellular segment spans residues 120 to 132; sequence LMNSWPFGDVLCK. C131 and C210 are disulfide-bonded. Residues 133–154 form a helical membrane-spanning segment; the sequence is IVISIDYYNMFTSIFTLTMMSV. The Cytoplasmic segment spans residues 155-173; it reads DRYIAVCHPVKALDFRTPL. A helical membrane pass occupies residues 174 to 196; that stretch reads KAKIINICIWLLSSSVGISAIIL. At 197 to 222 the chain is on the extracellular side; sequence GGTKVREDVDIIECSLQFPDDDYSWW. The chain crosses the membrane as a helical span at residues 223–247; sequence DLFMKICVFVFAFVIPVLIIIVCYT. Residues 248–274 are Cytoplasmic-facing; it reads LMILRLKSVRLLSGSREKDRNLRRITR. Residues 275 to 296 traverse the membrane as a helical segment; it reads LVLVVVAVFIICWTPIHIFILV. Residues 297–311 are Extracellular-facing; it reads EALGSTSHSTAALSS. A helical membrane pass occupies residues 312 to 333; sequence YYFCIALGYTNSSLNPILYAFL. At 334–380 the chain is on the cytoplasmic side; it reads DENFKRCFRDFCFPIKMRMERQSTSRVRNTVQDPAYMRNVDGVNKPV. A lipid anchor (S-palmitoyl cysteine) is attached at C345.

The protein belongs to the G-protein coupled receptor 1 family. Interacts with NHERF1. Interacts with GABARAPL1.

The protein localises to the cell membrane. G-protein coupled opioid receptor that functions as a receptor for endogenous alpha-neoendorphins and dynorphins, but has low affinity for beta-endorphins. Also functions as a receptor for various synthetic opioids and for the psychoactive diterpene salvinorin A. Ligand binding causes a conformation change that triggers signaling via guanine nucleotide-binding proteins (G proteins) and modulates the activity of down-stream effectors, such as adenylate cyclase. Signaling leads to the inhibition of adenylate cyclase activity. Inhibits neurotransmitter release by reducing calcium ion currents and increasing potassium ion conductance. Plays a role in the perception of pain. Plays a role in mediating reduced physical activity upon treatment with synthetic opioids. Plays a role in the regulation of salivation in response to synthetic opioids. May play a role in arousal and regulation of autonomic and neuroendocrine functions. The polypeptide is Kappa-type opioid receptor (OPRK1) (Cavia porcellus (Guinea pig)).